The following is an 85-amino-acid chain: Kunitz-type serine protease inhibitor homolog beta-bungarotoxin B4 chain (85 aa).

Residues 1-24 form the signal peptide; it reads MSSGGLLLLLGLLTLCAELTPVSS. The region spanning 31 to 81 is the BPTI/Kunitz inhibitor domain; it reads CDKPPDTKICQTVVRAFYYKPSAKRCVQFRYGGCNGNGNHFKSDHLCRCEC. Cystine bridges form between cysteine 31–cysteine 81, cysteine 40–cysteine 64, and cysteine 56–cysteine 77.

This sequence belongs to the venom Kunitz-type family. In terms of assembly, heterodimer; disulfide-linked. The A chains have phospholipase A2 activity and the B chains show homology with the basic protease inhibitors. As to expression, expressed by the venom gland.

The protein resides in the secreted. In terms of biological role, beta-bungarotoxins are presynaptic neurotoxins of the venom. The B chain is homologous to venom basic protease inhibitors but has no protease inhibitor activity and blocks voltage-gated potassium channels (Kv). The sequence is that of Kunitz-type serine protease inhibitor homolog beta-bungarotoxin B4 chain from Bungarus multicinctus (Many-banded krait).